Here is a 530-residue protein sequence, read N- to C-terminus: T-complex protein 1 subunit gamma (530 aa).

Belongs to the TCP-1 chaperonin family. As to quaternary structure, heterooligomeric complex of about 850 to 900 kDa that forms two stacked rings, 12 to 16 nm in diameter.

It localises to the cytoplasm. Functionally, molecular chaperone; assists the folding of proteins upon ATP hydrolysis. Known to play a role, in vitro, in the folding of actin and tubulin. This chain is T-complex protein 1 subunit gamma (cct3), found in Dictyostelium discoideum (Social amoeba).